We begin with the raw amino-acid sequence, 335 residues long: Protein-arginine kinase (335 aa).

Positions Ile20–Ile243 constitute a Phosphagen kinase C-terminal domain. ATP is bound by residues Ser23–Arg27, His81, Arg114, Arg165–Met169, and Arg196–Glu201.

It belongs to the ATP:guanido phosphotransferase family.

It carries out the reaction L-arginyl-[protein] + ATP = N(omega)-phospho-L-arginyl-[protein] + ADP + H(+). Its function is as follows. Catalyzes the specific phosphorylation of arginine residues in proteins. This is Protein-arginine kinase from Staphylococcus haemolyticus (strain JCSC1435).